The following is a 100-amino-acid chain: Aspartyl/glutamyl-tRNA(Asn/Gln) amidotransferase subunit C (100 aa).

The protein belongs to the GatC family. In terms of assembly, heterotrimer of A, B and C subunits.

The catalysed reaction is L-glutamyl-tRNA(Gln) + L-glutamine + ATP + H2O = L-glutaminyl-tRNA(Gln) + L-glutamate + ADP + phosphate + H(+). The enzyme catalyses L-aspartyl-tRNA(Asn) + L-glutamine + ATP + H2O = L-asparaginyl-tRNA(Asn) + L-glutamate + ADP + phosphate + 2 H(+). Allows the formation of correctly charged Asn-tRNA(Asn) or Gln-tRNA(Gln) through the transamidation of misacylated Asp-tRNA(Asn) or Glu-tRNA(Gln) in organisms which lack either or both of asparaginyl-tRNA or glutaminyl-tRNA synthetases. The reaction takes place in the presence of glutamine and ATP through an activated phospho-Asp-tRNA(Asn) or phospho-Glu-tRNA(Gln). In Rickettsia peacockii (strain Rustic), this protein is Aspartyl/glutamyl-tRNA(Asn/Gln) amidotransferase subunit C.